A 122-amino-acid polypeptide reads, in one-letter code: Small ribosomal subunit protein uS12 (122 aa).

It belongs to the universal ribosomal protein uS12 family. As to quaternary structure, part of the 30S ribosomal subunit. Contacts proteins S8 and S17. May interact with IF1 in the 30S initiation complex.

In terms of biological role, with S4 and S5 plays an important role in translational accuracy. Its function is as follows. Interacts with and stabilizes bases of the 16S rRNA that are involved in tRNA selection in the A site and with the mRNA backbone. Located at the interface of the 30S and 50S subunits, it traverses the body of the 30S subunit contacting proteins on the other side and probably holding the rRNA structure together. The combined cluster of proteins S8, S12 and S17 appears to hold together the shoulder and platform of the 30S subunit. This is Small ribosomal subunit protein uS12 from Corynebacterium efficiens (strain DSM 44549 / YS-314 / AJ 12310 / JCM 11189 / NBRC 100395).